The chain runs to 79 residues: Acyl carrier protein (79 aa).

Positions 3–78 constitute a Carrier domain; sequence QEILEKVCSI…DAVKFIEEKK (76 aa). Ser38 is subject to O-(pantetheine 4'-phosphoryl)serine.

This sequence belongs to the acyl carrier protein (ACP) family. Post-translationally, 4'-phosphopantetheine is transferred from CoA to a specific serine of apo-ACP by AcpS. This modification is essential for activity because fatty acids are bound in thioester linkage to the sulfhydryl of the prosthetic group.

The protein resides in the cytoplasm. It functions in the pathway lipid metabolism; fatty acid biosynthesis. Functionally, carrier of the growing fatty acid chain in fatty acid biosynthesis. The sequence is that of Acyl carrier protein from Prochlorococcus marinus (strain MIT 9312).